We begin with the raw amino-acid sequence, 437 residues long: MASLRVSVLLVAASCLLLGSGLRAGPRTLVLLENINLRETHSLFFRSLSDRGFDLSFRTADDPSLSLIKYGEFLYDNLIIFSPSVEDFGGNINIETISSFIDGGGSVLVAASSDIGDPLRELGSECGIEFDEDKTAVIDHHNYDISDPGQHSLIVADSESLLKAPTIVGKAPLNPILFRGVGMVADPDNPLVLDILTGSSTSYSFFPDKPITQYPHAVGKNTLLIAGLQARNNARVVFSGSMDFFSDAFFNSAVQKAAGGSNRYAKTGNYELAVALSRWVFKEEGVLRVGQVSHHRVGESSPPSAYTVTDLVEYSIVIEQLSNGKWVPFDGDDIQLEFVRIDPFVRTFLKKNGGKYSVQFKLPDVYGVFQFKVDYNRLGYTHLYSTTQVSVRPLQHTQYERFIPSAYPYYASAFSVMFGLFIFSIVFLHMKEKEKSD.

An N-terminal signal peptide occupies residues 1-24 (MASLRVSVLLVAASCLLLGSGLRA). At 25 to 407 (GPRTLVLLEN…QYERFIPSAY (383 aa)) the chain is on the lumenal side. The helical transmembrane segment at 408-428 (PYYASAFSVMFGLFIFSIVFL) threads the bilayer. Residues 429 to 437 (HMKEKEKSD) lie on the Cytoplasmic side of the membrane.

The protein belongs to the DDOST 48 kDa subunit family. As to quaternary structure, component of the oligosaccharyltransferase (OST) complex.

The protein resides in the endoplasmic reticulum membrane. The protein operates within protein modification; protein glycosylation. Subunit of the oligosaccharyl transferase (OST) complex that catalyzes the initial transfer of a defined glycan (Glc(3)Man(9)GlcNAc(2) in eukaryotes) from the lipid carrier dolichol-pyrophosphate to an asparagine residue within an Asn-X-Ser/Thr consensus motif in nascent polypeptide chains, the first step in protein N-glycosylation. N-glycosylation occurs cotranslationally and the complex associates with the Sec61 complex at the channel-forming translocon complex that mediates protein translocation across the endoplasmic reticulum (ER). All subunits are required for a maximal enzyme activity. Required for the assembly of both SST3A- and SS3B-containing OST complexes. In Xenopus tropicalis (Western clawed frog), this protein is Dolichyl-diphosphooligosaccharide--protein glycosyltransferase 48 kDa subunit.